The primary structure comprises 550 residues: Lariat debranching enzyme (550 aa).

2 residues coordinate a divalent metal cation: cysteine 8 and histidine 10. Serine 28 bears the Phosphoserine mark. Positions 39 and 84 each coordinate a divalent metal cation. The interval 124 to 154 (SGIFKSHDYRKGHFECPPYNSSTIRSIYHVR) is lariat recognition loop. An N6-acetyllysine modification is found at lysine 128. A divalent metal cation is bound by residues histidine 174, histidine 226, and histidine 228. Residues 390-550 (EHHQCGEYEQ…AVDDGDASAE (161 aa)) are disordered. The span at 416 to 426 (NTDTSALSSIN) shows a compositional bias: polar residues. Over residues 430-445 (IMLDEEEEEEEEEEEA) the composition is skewed to acidic residues. The span at 450–483 (SDMNTPSVEPASDQASDLSTSFSDIRNLPSSMFV) shows a compositional bias: polar residues. Residues serine 470, serine 480, serine 484, serine 485, serine 489, serine 491, serine 494, serine 505, and serine 520 each carry the phosphoserine modification. The span at 498–528 (KCGETVESGDEKDLAKFPLKRLSDEHEPEQR) shows a compositional bias: basic and acidic residues.

Belongs to the lariat debranching enzyme family. Requires Fe(2+) as cofactor. Zn(2+) serves as cofactor. The cofactor is Mn(2+).

It localises to the nucleus. Active in presence of diverse metals including Fe(2+), Zn(2+), Mn(2+). Also activated by Ca(2+). Binds two metal cations in two adjacent alpha and beta metal-binding pockets. Cleaves the 2'-5' phosphodiester linkage at the branch point of excised lariat intron RNA and converts them into linear molecules that can be subsequently degraded, thereby facilitating ribonucleotide turnover. Linked to its role in pre-mRNA processing mechanism, may also participate in retrovirus replication and have an antiviral cell-intrinsic defense function. In Mus musculus (Mouse), this protein is Lariat debranching enzyme (Dbr1).